Consider the following 455-residue polypeptide: Chromosomal replication initiator protein DnaA (455 aa).

The domain I, interacts with DnaA modulators stretch occupies residues 1 to 75; sequence MDTNNNIEKE…EILSQNKVGM (75 aa). The tract at residues 75-106 is domain II; sequence MHLAHSVDVRIEVAPKIQISTQSNINYKATKM. A domain III, AAA+ region region spans residues 107-321; sequence SVKDSYTFEN…GAIIKISVNA (215 aa). ATP contacts are provided by Gly151, Gly153, Lys154, and Thr155. The domain IV, binds dsDNA stretch occupies residues 322–455; it reads NLMNASIDLN…DKKTAFNSSE (134 aa).

It belongs to the DnaA family. Oligomerizes as a right-handed, spiral filament on DNA at oriC.

The protein localises to the cytoplasm. Functionally, plays an essential role in the initiation and regulation of chromosomal replication. ATP-DnaA binds to the origin of replication (oriC) to initiate formation of the DNA replication initiation complex once per cell cycle. Binds the DnaA box (a 9 base pair repeat at the origin) and separates the double-stranded (ds)DNA. Forms a right-handed helical filament on oriC DNA; dsDNA binds to the exterior of the filament while single-stranded (ss)DNA is stabiized in the filament's interior. The ATP-DnaA-oriC complex binds and stabilizes one strand of the AT-rich DNA unwinding element (DUE), permitting loading of DNA polymerase. After initiation quickly degrades to an ADP-DnaA complex that is not apt for DNA replication. Binds acidic phospholipids. In Helicobacter pylori (strain HPAG1), this protein is Chromosomal replication initiator protein DnaA.